Here is a 164-residue protein sequence, read N- to C-terminus: Choriogonadotropin subunit beta (164 aa).

An N-terminal signal peptide occupies residues 1–20 (MEMLQGLLLCLLLSTGGAWA). Cystine bridges form between C29/C77, C43/C92, C46/C130, C54/C108, C58/C110, and C113/C120. A glycan (N-linked (GlcNAc...) asparagine) is linked at N50. The segment at 135 to 164 (FQDSSSKDPPRNLTSPSQLLEPADPPLVPQ) is disordered. S140 carries an O-linked (GalNAc...) serine glycan. Residue N146 is glycosylated (N-linked (GlcNAc...) asparagine). S151 is a glycosylation site (O-linked (GalNAc...) serine).

Belongs to the glycoprotein hormones subunit beta family. Heterodimer of a common alpha chain and a unique beta chain which confers biological specificity to thyrotropin, lutropin, follitropin and gonadotropin. Placenta.

It localises to the secreted. Stimulates the ovaries to synthesize the steroids that are essential for the maintenance of pregnancy. The chain is Choriogonadotropin subunit beta (CGB) from Callithrix jacchus (White-tufted-ear marmoset).